We begin with the raw amino-acid sequence, 368 residues long: Nuclease EXOG, mitochondrial (368 aa).

The N-terminal 41 residues, 1-41 (MAAKSFASRLRDSRRFLNGFLAGAVVGAAGAGLTALQFFRR), are a transit peptide targeting the mitochondrion. Histidine 140 serves as the catalytic Proton acceptor. An a divalent metal cation-binding site is contributed by asparagine 171.

Belongs to the DNA/RNA non-specific endonuclease family. In terms of assembly, homodimer. Requires a divalent metal cation as cofactor.

The protein localises to the mitochondrion inner membrane. Endo/exonuclease with nicking activity towards supercoiled DNA, a preference for single-stranded DNA and 5'-3' exonuclease activity. The polypeptide is Nuclease EXOG, mitochondrial (Exog) (Mus musculus (Mouse)).